A 140-amino-acid polypeptide reads, in one-letter code: Putative pre-16S rRNA nuclease (140 aa).

It belongs to the YqgF nuclease family.

Its subcellular location is the cytoplasm. Functionally, could be a nuclease involved in processing of the 5'-end of pre-16S rRNA. This is Putative pre-16S rRNA nuclease from Edwardsiella ictaluri (strain 93-146).